A 145-amino-acid chain; its full sequence is Large ribosomal subunit protein uL16 (145 aa).

This sequence belongs to the universal ribosomal protein uL16 family. In terms of assembly, part of the 50S ribosomal subunit.

Functionally, binds 23S rRNA and is also seen to make contacts with the A and possibly P site tRNAs. The protein is Large ribosomal subunit protein uL16 of Lactobacillus gasseri (strain ATCC 33323 / DSM 20243 / BCRC 14619 / CIP 102991 / JCM 1131 / KCTC 3163 / NCIMB 11718 / NCTC 13722 / AM63).